Here is a 241-residue protein sequence, read N- to C-terminus: Guanosine phosphorylase (241 aa).

The protein belongs to the PNP/UDP phosphorylase family.

The catalysed reaction is guanosine + phosphate = alpha-D-ribose 1-phosphate + guanine. The enzyme catalyses a purine D-ribonucleoside + phosphate = a purine nucleobase + alpha-D-ribose 1-phosphate. It carries out the reaction inosine + phosphate = alpha-D-ribose 1-phosphate + hypoxanthine. It catalyses the reaction adenosine + phosphate = alpha-D-ribose 1-phosphate + adenine. With respect to regulation, activity is higher at low KCl concentrations. In terms of biological role, phosphorylase involved in the non-carboxylating pentose bisphosphate pathway, a nucleoside degradation pathway present in some halophilic archaea. Catalyzes the phosphorolytic cleavage of guanosine to guanine and ribose-1-phosphate (R1P). Exhibits the highest activity toward guanosine, but also shows lower activity against inosine and adenosine. The protein is Guanosine phosphorylase of Halorubrum lacusprofundi (strain ATCC 49239 / DSM 5036 / JCM 8891 / ACAM 34).